The primary structure comprises 319 residues: MamJ paralog LimJ (319 aa).

2 disordered regions span residues 1–59 and 145–176; these read MMME…PAPV and AAAPEPEPEPVPEPEPEPEPEAAHDHAATETE. Low complexity predominate over residues 30-52; that stretch reads AALAPAADAEIPASSAPEPAAPI. Positions 150–164 are enriched in acidic residues; the sequence is PEPEPVPEPEPEPEP.

Belongs to the magnetosome MamJ protein family.

The protein localises to the magnetosome. Regulates the dynamic behavior of MamK filaments; paralog MamJ also promotes MamK turnover. At least one other protein besides MamJ and LimJ is required for MamK turnover. Might connect magnetosomes to MamK filaments. This is MamJ paralog LimJ from Paramagnetospirillum magneticum (strain ATCC 700264 / AMB-1) (Magnetospirillum magneticum).